Consider the following 442-residue polypeptide: tRNA modification GTPase MnmE (442 aa).

(6S)-5-formyl-5,6,7,8-tetrahydrofolate-binding residues include Arg21, Glu79, and Lys118. Residues 214–367 (GFKIAIVGKP…LKEELQNYLN (154 aa)) form the TrmE-type G domain. Position 224 (Asn224) interacts with K(+). GTP contacts are provided by residues 224-229 (NVGKSS), 243-249 (SDIAGTT), and 268-271 (DTAG). Ser228 serves as a coordination point for Mg(2+). K(+) is bound by residues Ser243, Ile245, and Thr248. Thr249 contacts Mg(2+). Position 442 (Lys442) interacts with (6S)-5-formyl-5,6,7,8-tetrahydrofolate.

This sequence belongs to the TRAFAC class TrmE-Era-EngA-EngB-Septin-like GTPase superfamily. TrmE GTPase family. As to quaternary structure, homodimer. Heterotetramer of two MnmE and two MnmG subunits. It depends on K(+) as a cofactor.

It localises to the cytoplasm. In terms of biological role, exhibits a very high intrinsic GTPase hydrolysis rate. Involved in the addition of a carboxymethylaminomethyl (cmnm) group at the wobble position (U34) of certain tRNAs, forming tRNA-cmnm(5)s(2)U34. This Campylobacter jejuni subsp. jejuni serotype O:23/36 (strain 81-176) protein is tRNA modification GTPase MnmE.